Here is a 78-residue protein sequence, read N- to C-terminus: RNA-binding protein Hfq (78 aa).

The region spanning 10 to 69 (DPFLNALRKEHVPVSIYLVNGIKLQGHIESFDQYVVLLRNTVTQMVYKHAISTVVPARAV) is the Sm domain.

The protein belongs to the Hfq family. Homohexamer.

RNA chaperone that binds small regulatory RNA (sRNAs) and mRNAs to facilitate mRNA translational regulation in response to envelope stress, environmental stress and changes in metabolite concentrations. Also binds with high specificity to tRNAs. This chain is RNA-binding protein Hfq, found in Janthinobacterium sp. (strain Marseille) (Minibacterium massiliensis).